A 287-amino-acid chain; its full sequence is Ribosomal RNA small subunit methyltransferase A (287 aa).

6 residues coordinate S-adenosyl-L-methionine: asparagine 28, leucine 30, glycine 55, glutamate 77, aspartate 103, and asparagine 123.

It belongs to the class I-like SAM-binding methyltransferase superfamily. rRNA adenine N(6)-methyltransferase family. RsmA subfamily.

It is found in the cytoplasm. It carries out the reaction adenosine(1518)/adenosine(1519) in 16S rRNA + 4 S-adenosyl-L-methionine = N(6)-dimethyladenosine(1518)/N(6)-dimethyladenosine(1519) in 16S rRNA + 4 S-adenosyl-L-homocysteine + 4 H(+). In terms of biological role, specifically dimethylates two adjacent adenosines (A1518 and A1519) in the loop of a conserved hairpin near the 3'-end of 16S rRNA in the 30S particle. May play a critical role in biogenesis of 30S subunits. The protein is Ribosomal RNA small subunit methyltransferase A of Nitrobacter winogradskyi (strain ATCC 25391 / DSM 10237 / CIP 104748 / NCIMB 11846 / Nb-255).